Reading from the N-terminus, the 371-residue chain is Cytochrome b (371 aa).

A run of 4 helical transmembrane segments spans residues 25–45, 69–90, 105–125, and 170–190; these read FGSM…FLAV, WMMQ…YIHI, WLSG…GYVL, and FFAL…LHIM. 2 residues coordinate heme b: His75 and His89. Heme b-binding residues include His174 and His188. His193 contributes to the a ubiquinone binding site. Helical transmembrane passes span 218 to 238, 280 to 300, 312 to 332, and 339 to 358; these read YKDL…VSFL, LGGA…PFTH, IMQL…WAAT, and FTMI…IMNP.

The protein belongs to the cytochrome b family. As to quaternary structure, the cytochrome bc1 complex contains 3 respiratory subunits (MT-CYB, CYC1 and UQCRFS1), 2 core proteins (UQCRC1 and UQCRC2) and probably 6 low-molecular weight proteins. Heme b is required as a cofactor.

It is found in the mitochondrion inner membrane. Its function is as follows. Component of the ubiquinol-cytochrome c reductase complex (complex III or cytochrome b-c1 complex) that is part of the mitochondrial respiratory chain. The b-c1 complex mediates electron transfer from ubiquinol to cytochrome c. Contributes to the generation of a proton gradient across the mitochondrial membrane that is then used for ATP synthesis. This chain is Cytochrome b (MT-CYB), found in Eryx miliaris (Desert sand boa).